Here is a 203-residue protein sequence, read N- to C-terminus: Outer-membrane lipoprotein LolB (203 aa).

The N-terminal stretch at 1–20 (MNRSRRLALLCLGVPLLLQA) is a signal peptide. C21 carries the N-palmitoyl cysteine lipid modification. Residue C21 is the site of S-diacylglycerol cysteine attachment.

It belongs to the LolB family. Monomer.

It is found in the cell outer membrane. Its function is as follows. Plays a critical role in the incorporation of lipoproteins in the outer membrane after they are released by the LolA protein. This chain is Outer-membrane lipoprotein LolB, found in Cupriavidus taiwanensis (strain DSM 17343 / BCRC 17206 / CCUG 44338 / CIP 107171 / LMG 19424 / R1) (Ralstonia taiwanensis (strain LMG 19424)).